The chain runs to 303 residues: Protoheme IX farnesyltransferase 1 (303 aa).

9 helical membrane-spanning segments follow: residues 18 to 38 (PGII…AAQG), 42 to 62 (LTLM…GCAV), 91 to 111 (AVLS…AIFT), 114 to 134 (LAVL…SLYM), 139 to 159 (VYGT…GYCA), 169 to 189 (VILL…IAIF), 213 to 233 (LHIV…PLAG), 235 to 255 (TGIA…AMAL), and 274 to 294 (FSII…QVVA).

It belongs to the UbiA prenyltransferase family. Protoheme IX farnesyltransferase subfamily.

It is found in the cell inner membrane. The enzyme catalyses heme b + (2E,6E)-farnesyl diphosphate + H2O = Fe(II)-heme o + diphosphate. It participates in porphyrin-containing compound metabolism; heme O biosynthesis; heme O from protoheme: step 1/1. In terms of biological role, converts heme B (protoheme IX) to heme O by substitution of the vinyl group on carbon 2 of heme B porphyrin ring with a hydroxyethyl farnesyl side group. The polypeptide is Protoheme IX farnesyltransferase 1 (Shewanella frigidimarina (strain NCIMB 400)).